The primary structure comprises 127 residues: Glycine cleavage system H protein (127 aa).

The Lipoyl-binding domain maps to 23-104 (TALVGLTDYA…PYEAWFAKIT (82 aa)). Residue Lys-64 is modified to N6-lipoyllysine.

It belongs to the GcvH family. As to quaternary structure, the glycine cleavage system is composed of four proteins: P, T, L and H. (R)-lipoate is required as a cofactor.

Functionally, the glycine cleavage system catalyzes the degradation of glycine. The H protein shuttles the methylamine group of glycine from the P protein to the T protein. This chain is Glycine cleavage system H protein, found in Lachnoclostridium phytofermentans (strain ATCC 700394 / DSM 18823 / ISDg) (Clostridium phytofermentans).